A 270-amino-acid polypeptide reads, in one-letter code: Thiazole synthase (270 aa).

Catalysis depends on lysine 111, which acts as the Schiff-base intermediate with DXP. 1-deoxy-D-xylulose 5-phosphate-binding positions include glycine 172, 198 to 199 (AG), and 220 to 221 (NT).

The protein belongs to the ThiG family. Homotetramer. Forms heterodimers with either ThiH or ThiS.

It is found in the cytoplasm. The catalysed reaction is [ThiS sulfur-carrier protein]-C-terminal-Gly-aminoethanethioate + 2-iminoacetate + 1-deoxy-D-xylulose 5-phosphate = [ThiS sulfur-carrier protein]-C-terminal Gly-Gly + 2-[(2R,5Z)-2-carboxy-4-methylthiazol-5(2H)-ylidene]ethyl phosphate + 2 H2O + H(+). It participates in cofactor biosynthesis; thiamine diphosphate biosynthesis. Catalyzes the rearrangement of 1-deoxy-D-xylulose 5-phosphate (DXP) to produce the thiazole phosphate moiety of thiamine. Sulfur is provided by the thiocarboxylate moiety of the carrier protein ThiS. In vitro, sulfur can be provided by H(2)S. The sequence is that of Thiazole synthase from Methylococcus capsulatus (strain ATCC 33009 / NCIMB 11132 / Bath).